We begin with the raw amino-acid sequence, 338 residues long: MSVHIPTLNSATKIKHYYGFKYLLNSSVHTQIYNKLQLQSTYKMDELKVLDLYPGPSQHSAIFRNIFNPKQYVLMDSRPDFVKFIQDNFAGTSMELYQRDPYEWSSYTDMIEKEKRFVPNRQSRDKIHNQFLVMANLTGMIGEGLFMQWLSCIGNKNWLQRFGRVKMLVWVPEATAHKVLARPGSLIRAKCSVVTEAFTDTKLVATSDSSTLQKFSSSLLEGHDPIIFSTRDTWLNSGKPISLLEVNPIDHDIDLDNWDYVTKHLLILKSTPLHTAIDSLGHGGKQYFSEKVEDKLLMDKCPKDLTNKEFVYLTSIFNNWPFKPDIYMDFIDVFQENE.

Positions 23, 76, 100, and 136 each coordinate S-adenosyl-L-methionine.

This sequence belongs to the class I-like SAM-binding methyltransferase superfamily. rRNA adenine N(6)-methyltransferase family.

The protein localises to the mitochondrion. Functionally, mitochondrial transcription factor that confers selective promoter recognition on the core subunit of the yeast mitochondrial RNA polymerase. Interacts with DNA in a non-specific manner. The chain is Mitochondrial transcription factor 1 (MTF1) from Lachancea kluyveri (Yeast).